A 383-amino-acid polypeptide reads, in one-letter code: MYTHYLKNLISFESVTPNSAGAVEYIDGLLKQHGFKTEIKIFGDSKNERVTNLYGVFGSNEPNICFVGHVDVVPAGNHEFWHNSNPFKFHEQDGKIYGRGAVDMKGAIACFLAASLNFIKNNMDFKGSISFLITSDEEGKSTHGTKEMLQYIYDQRYKIDFAVVGEPTCEKEIGDTIKIGRRGSVNFKLNIVGLAGHVAYPHKANNPLPCLIKILNELTNIRLDEGTEFFQNSNLEVTNIDVGNDILNTIPASAEACFNIRFNSLHSVETLSQLIEQIIKQYCKEYKVDYKLEYSSSAESFVQNPNDNDKIKEFADVIERTLKIKSEFSTSGGTSDARFVKDYCSLVEFGLLSEMAHKINEYTKISDLQKLYDVYYNFLMEIF.

His69 contacts Zn(2+). The active site involves Asp71. Residue Asp103 participates in Zn(2+) binding. Glu137 acts as the Proton acceptor in catalysis. 3 residues coordinate Zn(2+): Glu138, Glu166, and His357.

It belongs to the peptidase M20A family. DapE subfamily. In terms of assembly, homodimer. It depends on Zn(2+) as a cofactor. Co(2+) serves as cofactor.

It carries out the reaction N-succinyl-(2S,6S)-2,6-diaminopimelate + H2O = (2S,6S)-2,6-diaminopimelate + succinate. It functions in the pathway amino-acid biosynthesis; L-lysine biosynthesis via DAP pathway; LL-2,6-diaminopimelate from (S)-tetrahydrodipicolinate (succinylase route): step 3/3. Catalyzes the hydrolysis of N-succinyl-L,L-diaminopimelic acid (SDAP), forming succinate and LL-2,6-diaminopimelate (DAP), an intermediate involved in the bacterial biosynthesis of lysine and meso-diaminopimelic acid, an essential component of bacterial cell walls. This Rickettsia typhi (strain ATCC VR-144 / Wilmington) protein is Succinyl-diaminopimelate desuccinylase.